Consider the following 275-residue polypeptide: uncharacterized protein (275 aa).

Transmembrane regions (helical) follow at residues leucine 15–serine 35, alanine 39–phenylalanine 59, and isoleucine 70–leucine 90. The disordered stretch occupies residues serine 140–proline 191.

The protein localises to the mitochondrion membrane. This is an uncharacterized protein from Arabidopsis thaliana (Mouse-ear cress).